Reading from the N-terminus, the 165-residue chain is Endoribonuclease YbeY (165 aa).

His-130, His-134, and His-140 together coordinate Zn(2+).

It belongs to the endoribonuclease YbeY family. It depends on Zn(2+) as a cofactor.

It localises to the cytoplasm. Single strand-specific metallo-endoribonuclease involved in late-stage 70S ribosome quality control and in maturation of the 3' terminus of the 16S rRNA. This Streptococcus agalactiae serotype Ia (strain ATCC 27591 / A909 / CDC SS700) protein is Endoribonuclease YbeY.